Reading from the N-terminus, the 330-residue chain is tRNA U34 carboxymethyltransferase (330 aa).

Carboxy-S-adenosyl-L-methionine-binding positions include K91, W105, K110, G130, 152 to 154 (DPS), 181 to 182 (IE), M196, Y200, and R315.

This sequence belongs to the class I-like SAM-binding methyltransferase superfamily. CmoB family. In terms of assembly, homotetramer.

It carries out the reaction carboxy-S-adenosyl-L-methionine + 5-hydroxyuridine(34) in tRNA = 5-carboxymethoxyuridine(34) in tRNA + S-adenosyl-L-homocysteine + H(+). Catalyzes carboxymethyl transfer from carboxy-S-adenosyl-L-methionine (Cx-SAM) to 5-hydroxyuridine (ho5U) to form 5-carboxymethoxyuridine (cmo5U) at position 34 in tRNAs. The chain is tRNA U34 carboxymethyltransferase from Shewanella sediminis (strain HAW-EB3).